Consider the following 138-residue polypeptide: Fluoride-specific ion channel FluC (138 aa).

The next 4 helical transmembrane spans lie at 34 to 54 (FMPKLWEGLSVGAGAAVGACA), 60 to 80 (MQFGEGLWPILAINMLGSFLM), 88 to 108 (FWGTGVLGGFTTFSAFAVVLV), and 112 to 132 (LPHAVAYLTVTVVSCVAAWLM). Residues G95 and T98 each contribute to the Na(+) site.

It belongs to the fluoride channel Fluc/FEX (TC 1.A.43) family.

It localises to the cell membrane. It carries out the reaction fluoride(in) = fluoride(out). Its activity is regulated as follows. Na(+) is not transported, but it plays an essential structural role and its presence is essential for fluoride channel function. Fluoride-specific ion channel. Important for reducing fluoride concentration in the cell, thus reducing its toxicity. This Corynebacterium efficiens (strain DSM 44549 / YS-314 / AJ 12310 / JCM 11189 / NBRC 100395) protein is Fluoride-specific ion channel FluC.